A 561-amino-acid polypeptide reads, in one-letter code: Dihydroxy-acid dehydratase (561 aa).

A [2Fe-2S] cluster-binding site is contributed by cysteine 50. Aspartate 82 contributes to the Mg(2+) binding site. Cysteine 123 contributes to the [2Fe-2S] cluster binding site. Mg(2+)-binding residues include aspartate 124 and lysine 125. N6-carboxylysine is present on lysine 125. Cysteine 195 is a [2Fe-2S] cluster binding site. Mg(2+) is bound at residue glutamate 447. The Proton acceptor role is filled by serine 473.

The protein belongs to the IlvD/Edd family. In terms of assembly, homodimer. [2Fe-2S] cluster serves as cofactor. It depends on Mg(2+) as a cofactor.

It catalyses the reaction (2R)-2,3-dihydroxy-3-methylbutanoate = 3-methyl-2-oxobutanoate + H2O. The catalysed reaction is (2R,3R)-2,3-dihydroxy-3-methylpentanoate = (S)-3-methyl-2-oxopentanoate + H2O. It functions in the pathway amino-acid biosynthesis; L-isoleucine biosynthesis; L-isoleucine from 2-oxobutanoate: step 3/4. The protein operates within amino-acid biosynthesis; L-valine biosynthesis; L-valine from pyruvate: step 3/4. Its function is as follows. Functions in the biosynthesis of branched-chain amino acids. Catalyzes the dehydration of (2R,3R)-2,3-dihydroxy-3-methylpentanoate (2,3-dihydroxy-3-methylvalerate) into 2-oxo-3-methylpentanoate (2-oxo-3-methylvalerate) and of (2R)-2,3-dihydroxy-3-methylbutanoate (2,3-dihydroxyisovalerate) into 2-oxo-3-methylbutanoate (2-oxoisovalerate), the penultimate precursor to L-isoleucine and L-valine, respectively. The chain is Dihydroxy-acid dehydratase from Crocosphaera subtropica (strain ATCC 51142 / BH68) (Cyanothece sp. (strain ATCC 51142)).